The following is a 534-amino-acid chain: Prolyl 4-hydroxylase subunit alpha-1 (534 aa).

The signal sequence occupies residues 1-17; that stretch reads MIWYILVVGILLPQSLA. A glycan (N-linked (GlcNAc...) asparagine) is linked at N113. The stretch at 205 to 238 is one TPR repeat; sequence VSVLDYLSYAVYQQGDLDKALLLTKKLLELDPEH. The tract at residues 258 to 277 is disordered; the sequence is ANKSSSDDQSDQKTTLKKKG. The N-linked (GlcNAc...) asparagine glycan is linked to N259. The Fe2OG dioxygenase domain occupies 411 to 519; the sequence is TAEELQVANY…KWVSNKWLHE (109 aa). Residues H429, D431, and H500 each coordinate Fe cation. Residue K510 coordinates 2-oxoglutarate.

It belongs to the P4HA family. As to quaternary structure, heterotetramer of two alpha-1 chains and two beta chains (P4HB)(the beta chain is the multi-functional PDI), where P4HB plays the role of a structural subunit; this tetramer catalyzes the formation of 4-hydroxyproline in collagen. The cofactor is Fe(2+). It depends on L-ascorbate as a cofactor.

The protein resides in the endoplasmic reticulum lumen. The enzyme catalyses L-prolyl-[collagen] + 2-oxoglutarate + O2 = trans-4-hydroxy-L-prolyl-[collagen] + succinate + CO2. Its function is as follows. Catalyzes the post-translational formation of 4-hydroxyproline in -Xaa-Pro-Gly- sequences in collagens and other proteins. The chain is Prolyl 4-hydroxylase subunit alpha-1 (P4HA1) from Bos taurus (Bovine).